The chain runs to 69 residues: MSRKKHESSENNPVWFPTIMFGLMGTGAVWMVLFYISNGALPLPAVGTWNILIAFGIIMAGFAMMSRWK.

Helical transmembrane passes span 14–34 and 45–65; these read VWFPTIMFGLMGTGAVWMVLF and AVGTWNILIAFGIIMAGFAMM.

Belongs to the CrgA family.

It is found in the cell membrane. Its function is as follows. Involved in cell division. The chain is Cell division protein CrgA from Tropheryma whipplei (strain TW08/27) (Whipple's bacillus).